Reading from the N-terminus, the 476-residue chain is RuvB-like helicase 2 (476 aa).

ATP is bound at residue 76–83; sequence GPPSTGKT.

This sequence belongs to the RuvB family. In terms of assembly, may form heterododecamers with RVB1. Component of the SWR1 chromatin remodeling complex, the INO80 chromatin remodeling complex, and of the R2TP complex.

The protein localises to the nucleus. The enzyme catalyses ATP + H2O = ADP + phosphate + H(+). DNA helicase which participates in several chromatin remodeling complexes, including the SWR1 and the INO80 complexes. The SWR1 complex mediates the ATP-dependent exchange of histone H2A for the H2A variant HZT1 leading to transcriptional regulation of selected genes by chromatin remodeling. The INO80 complex remodels chromatin by shifting nucleosomes and is involved in DNA repair. Also involved in pre-rRNA processing. This Candida glabrata (strain ATCC 2001 / BCRC 20586 / JCM 3761 / NBRC 0622 / NRRL Y-65 / CBS 138) (Yeast) protein is RuvB-like helicase 2 (RVB2).